Here is a 156-residue protein sequence, read N- to C-terminus: uncharacterized protein (156 aa).

Residues M1–A12 are compositionally biased toward pro residues. 2 disordered regions span residues M1–A89 and P129–D156. Over residues A49 to T67 the composition is skewed to basic and acidic residues.

This is an uncharacterized protein from Homo sapiens (Human).